We begin with the raw amino-acid sequence, 591 residues long: Lipoprotein LpqB (591 aa).

The first 20 residues, 1 to 20 (MTLRPSRRAVLSAAAVLLTG), serve as a signal peptide directing secretion. Cysteine 21 carries N-palmitoyl cysteine lipidation. A lipid anchor (S-diacylglycerol cysteine) is attached at cysteine 21.

It belongs to the LpqB lipoprotein family.

It localises to the cell membrane. The protein is Lipoprotein LpqB of Cutibacterium acnes (strain DSM 16379 / KPA171202) (Propionibacterium acnes).